We begin with the raw amino-acid sequence, 778 residues long: Jhy protein homolog (778 aa).

Disordered regions lie at residues 62-271 (DRIR…PKTD), 334-408 (QYES…LDTS), 631-654 (EKGKKHKKRSSSKNTKLKGYQKRD), and 721-746 (IPKPKPSNLTHQASKEQKNPTYAGKE). Residues 118-139 (PIEDKYSDLRYDPNWKSKKEEG) show a composition bias toward basic and acidic residues. Low complexity predominate over residues 223-234 (SSLSPYVKSSSS). Positions 334–344 (QYESTKSSNVP) are enriched in polar residues. Residues 358–371 (SRRPAKLKIRKQCK) are compositionally biased toward basic residues. Polar residues predominate over residues 375–389 (GLKSSTTEEVTASQG). Residues 390-402 (NQNNPPRQQQNQN) are compositionally biased toward low complexity. The span at 633 to 650 (GKKHKKRSSSKNTKLKGY) shows a compositional bias: basic residues. A compositionally biased stretch (basic and acidic residues) spans 733-746 (ASKEQKNPTYAGKE).

Its function is as follows. Required for the normal development of cilia in brain ependymal cells lining the ventricular surfaces. This Homo sapiens (Human) protein is Jhy protein homolog.